The sequence spans 319 residues: Beta-ketoacyl-[acyl-carrier-protein] synthase III (319 aa).

Residues C115 and H246 contribute to the active site. Residues 247 to 251 (QANLR) form an ACP-binding region. N276 is an active-site residue.

The protein belongs to the thiolase-like superfamily. FabH family. In terms of assembly, homodimer.

It is found in the cytoplasm. It carries out the reaction malonyl-[ACP] + acetyl-CoA + H(+) = 3-oxobutanoyl-[ACP] + CO2 + CoA. It participates in lipid metabolism; fatty acid biosynthesis. Catalyzes the condensation reaction of fatty acid synthesis by the addition to an acyl acceptor of two carbons from malonyl-ACP. Catalyzes the first condensation reaction which initiates fatty acid synthesis and may therefore play a role in governing the total rate of fatty acid production. Possesses both acetoacetyl-ACP synthase and acetyl transacylase activities. Its substrate specificity determines the biosynthesis of branched-chain and/or straight-chain of fatty acids. This chain is Beta-ketoacyl-[acyl-carrier-protein] synthase III, found in Coxiella burnetii (strain CbuK_Q154) (Coxiella burnetii (strain Q154)).